Consider the following 421-residue polypeptide: Ubiquitin-like modifier-activating enzyme 5 (421 aa).

ATP contacts are provided by Gly89, Asp110, Lys133, Asn156, and Asn191. Zn(2+) is bound by residues Cys233 and Cys236. The Glycyl thioester intermediate role is filled by Cys257. Zn(2+) is bound by residues Cys310 and Cys315.

The protein belongs to the ubiquitin-activating E1 family. UBA5 subfamily.

In terms of biological role, E1-like enzyme which activates UFM1. The polypeptide is Ubiquitin-like modifier-activating enzyme 5 (Oryza sativa subsp. japonica (Rice)).